A 689-amino-acid polypeptide reads, in one-letter code: DNA ligase (689 aa).

Residues 40 to 44, 89 to 90, and glutamate 122 each bind NAD(+); these read DQEYD and SL. Lysine 124 functions as the N6-AMP-lysine intermediate in the catalytic mechanism. Residues arginine 145, glutamate 182, lysine 300, and lysine 325 each coordinate NAD(+). Residues cysteine 419, cysteine 422, cysteine 437, and cysteine 442 each contribute to the Zn(2+) site. Residues 600–689 form the BRCT domain; that stretch reads QADGVLTGAT…SADASADASA (90 aa).

Belongs to the NAD-dependent DNA ligase family. LigA subfamily. Mg(2+) is required as a cofactor. Mn(2+) serves as cofactor.

It catalyses the reaction NAD(+) + (deoxyribonucleotide)n-3'-hydroxyl + 5'-phospho-(deoxyribonucleotide)m = (deoxyribonucleotide)n+m + AMP + beta-nicotinamide D-nucleotide.. In terms of biological role, DNA ligase that catalyzes the formation of phosphodiester linkages between 5'-phosphoryl and 3'-hydroxyl groups in double-stranded DNA using NAD as a coenzyme and as the energy source for the reaction. It is essential for DNA replication and repair of damaged DNA. The polypeptide is DNA ligase (Gemmatimonas aurantiaca (strain DSM 14586 / JCM 11422 / NBRC 100505 / T-27)).